Reading from the N-terminus, the 120-residue chain is NADH-quinone oxidoreductase subunit A (120 aa).

3 consecutive transmembrane segments (helical) span residues 6–26, 63–83, and 89–109; these read YGII…ALAT, FLYA…YPWA, and LGLF…LGLW.

It belongs to the complex I subunit 3 family. NDH-1 is composed of 14 different subunits. Subunits NuoA, H, J, K, L, M, N constitute the membrane sector of the complex.

The protein resides in the cell membrane. It carries out the reaction a quinone + NADH + 5 H(+)(in) = a quinol + NAD(+) + 4 H(+)(out). In terms of biological role, NDH-1 shuttles electrons from NADH, via FMN and iron-sulfur (Fe-S) centers, to quinones in the respiratory chain. The immediate electron acceptor for the enzyme in this species is believed to be a menaquinone. Couples the redox reaction to proton translocation (for every two electrons transferred, four hydrogen ions are translocated across the cytoplasmic membrane), and thus conserves the redox energy in a proton gradient. In Moorella thermoacetica (strain ATCC 39073 / JCM 9320), this protein is NADH-quinone oxidoreductase subunit A.